A 548-amino-acid polypeptide reads, in one-letter code: Glucose-6-phosphate isomerase (548 aa).

E355 (proton donor) is an active-site residue. Catalysis depends on residues H386 and K511.

This sequence belongs to the GPI family.

The protein resides in the cytoplasm. The catalysed reaction is alpha-D-glucose 6-phosphate = beta-D-fructose 6-phosphate. It functions in the pathway carbohydrate biosynthesis; gluconeogenesis. It participates in carbohydrate degradation; glycolysis; D-glyceraldehyde 3-phosphate and glycerone phosphate from D-glucose: step 2/4. In terms of biological role, catalyzes the reversible isomerization of glucose-6-phosphate to fructose-6-phosphate. This is Glucose-6-phosphate isomerase from Wigglesworthia glossinidia brevipalpis.